The sequence spans 330 residues: Olfactory receptor 1P1 (330 aa).

Residues 1–39 lie on the Extracellular side of the membrane; that stretch reads MGLTQDFFPPTSELLEGGNQTSTFEFLLWGLSDQPQQQH. A glycan (N-linked (GlcNAc...) asparagine) is linked at asparagine 19. Residues 40 to 60 traverse the membrane as a helical segment; that stretch reads IFFLLFLWMYVVTVAGNLLIV. At 61 to 71 the chain is on the cytoplasmic side; sequence LAIGTDTHLHT. A helical transmembrane segment spans residues 72–92; it reads PMYFFLASLSCADIFSTSTTV. The Extracellular portion of the chain corresponds to 93-111; the sequence is PKALVNIQTQSRSISYAGC. Cysteine 111 and cysteine 192 are joined by a disulfide. Residues 112–132 traverse the membrane as a helical segment; it reads LAQLYFFLTFGDMDIFLPATM. The Cytoplasmic portion of the chain corresponds to 133-137; that stretch reads AYDRY. Residues 138 to 158 form a helical membrane-spanning segment; the sequence is VAICHLLHYMMIMSLHRCAFL. Topologically, residues 159–209 are extracellular; that stretch reads VTACWTLTSLLAMTRTFLIFRLSLCSKILPGFFCDLGPLMKVSCSDAQVNE. Residues 210 to 230 traverse the membrane as a helical segment; sequence LVLLFLGGAVILIPFMLILVS. Topologically, residues 231-257 are cytoplasmic; sequence YIRIVSAILRAPSAQGRRKAFSTCDSH. Residues 258-278 traverse the membrane as a helical segment; sequence LVVVALFFGTVIRAYLCPSSS. Residues 279–286 are Extracellular-facing; that stretch reads SSNSVKED. The chain crosses the membrane as a helical span at residues 287–307; sequence TAAAVMYTVVTPLLNPFIYSM. The Cytoplasmic portion of the chain corresponds to 308 to 330; the sequence is RNKDMKAAVVRLLKGRVSFSQGQ.

Belongs to the G-protein coupled receptor 1 family.

It localises to the cell membrane. In terms of biological role, odorant receptor. The polypeptide is Olfactory receptor 1P1 (OR1P1) (Homo sapiens (Human)).